The chain runs to 1222 residues: Serine/threonine-protein kinase WNK4 (1222 aa).

Over residues 1–17 (MLAPRNTETGVPMSQTE) the composition is skewed to polar residues. A disordered region spans residues 1–165 (MLAPRNTETG…DTETQAVATS (165 aa)). Over residues 90–101 (AGPTRSPPSSSK) the composition is skewed to low complexity. At Ser95 the chain carries Phosphoserine. Basic and acidic residues predominate over residues 135–152 (EPPRVPDAAARERRREQE). Residues Lys154 and Lys172 each participate in a glycyl lysine isopeptide (Lys-Gly) (interchain with G-Cter in ubiquitin) cross-link. The Protein kinase domain maps to 171–429 (LKFDIEIGRG…IQDLLAHAFF (259 aa)). ATP is bound at residue Ser181. Residues Lys183, Lys223, and Lys238 each participate in a glycyl lysine isopeptide (Lys-Gly) (interchain with G-Cter in ubiquitin) cross-link. Residues 251–254 (TELM) and Lys301 each bind ATP. Catalysis depends on Asp318, which acts as the Proton acceptor. Lys325 is covalently cross-linked (Glycyl lysine isopeptide (Lys-Gly) (interchain with G-Cter in ubiquitin)). 2 positions are modified to phosphoserine; by autocatalysis: Ser328 and Ser332. Residues Lys384, Lys390, Lys447, and Lys451 each participate in a glycyl lysine isopeptide (Lys-Gly) (interchain with G-Cter in ubiquitin) cross-link. A disordered region spans residues 525–562 (RELEVLPPDSGPPPATVSLAPGPPSAFPPEPEEPEADQ). Pro residues predominate over residues 533 to 553 (DSGPPPATVSLAPGPPSAFPP). Residues 554-564 (EPEEPEADQHQ) are interaction with KLHL3. Ser572 carries the post-translational modification Phosphoserine. Disordered regions lie at residues 626-659 (RSGP…MRKN), 747-809 (DAGP…GAPF), 877-896 (SYPQ…SPPS), and 927-976 (SPGL…AQPL). Composition is skewed to low complexity over residues 627 to 638 (SGPGSDFSPGDS), 757 to 769 (ALSP…ALPA), 793 to 807 (STSP…SPGA), and 877 to 890 (SYPQ…SLPV). Over residues 935-944 (PPAPPGPLPS) the composition is skewed to pro residues. A compositionally biased stretch (polar residues) spans 953–963 (DQESLSAQTAE). Lys990 is covalently cross-linked (Glycyl lysine isopeptide (Lys-Gly) (interchain with G-Cter in ubiquitin)). Positions 996 to 999 (RFQV) match the RFXV motif motif. Positions 1000-1087 (TSSKEPAEPP…SSPILSHPSP (88 aa)) are disordered. A Phosphoserine modification is found at Ser1014. A compositionally biased stretch (low complexity) spans 1014–1032 (SPTLSRSLKLPSPPLTSES). The segment covering 1044–1056 (ETREALAESDRAA) has biased composition (basic and acidic residues). Residues Lys1123, Lys1136, and Lys1137 each participate in a glycyl lysine isopeptide (Lys-Gly) (interchain with G-Cter in ubiquitin) cross-link. Positions 1166–1222 (RRLSKGSFPTSRRNSLQRSDLPGPGIMRRNSLSGSSTGSQEQRASKGVTFAGDIGRM) are disordered. Polar residues-rich tracts occupy residues 1172–1183 (SFPTSRRNSLQR) and 1195–1207 (NSLS…SQEQ). Ser1196 bears the Phosphoserine mark.

The protein belongs to the protein kinase superfamily. Ser/Thr protein kinase family. WNK subfamily. As to quaternary structure, interacts with the C-terminal region of KCNJ1. Interacts with WNK1 and WNK3. Interacts with KLHL3. Mg(2+) serves as cofactor. Autophosphorylated at Ser-328 and Ser-332, promoting its activation. Phosphorylated by WNK1 and WNK3. Phosphorylated at Ser-572 in a MAP3K15/ASK3-dependent process in response to osmotic stress or hypotonic low-chloride stimulation. Post-translationally, ubiquitinated by the BCR(KLHL3) complex, leading to its degradation. Also ubiquitinated by the BCR(KLHL2) complex. In terms of tissue distribution, locates to the distal convoluted tubule, the medullary collecting duct and the cortical collecting duct of the kidney. Expressed in pancreatic duct.

The protein resides in the cell junction. The protein localises to the tight junction. It carries out the reaction L-seryl-[protein] + ATP = O-phospho-L-seryl-[protein] + ADP + H(+). The catalysed reaction is L-threonyl-[protein] + ATP = O-phospho-L-threonyl-[protein] + ADP + H(+). With respect to regulation, activation requires autophosphorylation of Ser-328 and Ser-332. Autophosphorylation and subsequent activation is inhibited by increases in intracellular ionic strength: Cl(-) potently inhibits WNK4 kinase activity via direct binding. Also inhibited by K(+) ions. Serine/threonine-protein kinase component of the WNK4-SPAK/OSR1 kinase cascade, which acts as a key regulator of ion transport in the distal nephron and blood pressure. The WNK4-SPAK/OSR1 kinase cascade is composed of WNK4, which mediates phosphorylation and activation of downstream kinases OXSR1/OSR1 and STK39/SPAK. Following activation, OXSR1/OSR1 and STK39/SPAK catalyze phosphorylation of ion cotransporters, such as SLC12A1/NKCC2, SLC12A2/NKCC1, SLC12A3/NCC, SLC12A5/KCC2 or SLC12A6/KCC3, regulating their activity. Acts as a molecular switch that regulates the balance between renal salt reabsorption and K(+) secretion by modulating the activities of renal transporters and channels, including the Na-Cl cotransporter SLC12A3/NCC and the K(+) channel, KCNJ1/ROMK. Regulates NaCl reabsorption in the distal nephron by activating the thiazide-sensitive Na-Cl cotransporter SLC12A3/NCC in distal convoluted tubule cells of kidney: activates SLC12A3/NCC in a OXSR1/OSR1- and STK39/SPAK-dependent process. Also acts as a scaffold protein independently of its protein kinase activity: negatively regulates cell membrane localization of various transporters and channels (CFTR, KCNJ1/ROMK, SLC4A4, SLC26A9 and TRPV4) by clathrin-dependent endocytosis. Also inhibits the activity of the epithelial Na(+) channel (ENaC) SCNN1A, SCNN1B, SCNN1D in a inase-independent mechanism. May also phosphorylate NEDD4L. This Mus musculus (Mouse) protein is Serine/threonine-protein kinase WNK4.